Reading from the N-terminus, the 471-residue chain is MTKLIKNGTIVTATDIYEADLLIQDGKIAVIGRNLDESGAEVIDATGCYVFPGGIDPHTHLDMPFGGTVTKDDFESGTIAAAFGGTTTIIDFCLTNKGEPLKKAIETWHNKATGKAVIDYGFHLMISEITDDVLEELPKVIEEEGITSFKVFMAYKDVFQADDGTLYRTLVAAKELGALVMVHAENGDVIDYLTKKALEDGHTDPIYHALTRPPELEGEATGRACQLTELAGSQLYVVHVSCAQAVEKIAEARNKGLNVWGETCPQYLVLDQSYLEKPNFEGAKYVWSPPLREKWHQEVLWNALKNGQLQTLGSDQCSFDFKGQKELGRGDFTKIPNGGPIIEDRVSILFSEGVKKGRITLNQFVDIVSTRIAKLFGLFPKKGTIAVGADADLVIFDPTVERVISAETHHMAVDYNPFEGMKVTGEPVSVLCRGEFVVRDKQFVGKPGYGQYVKRAKYGALMADQDVVKMS.

The Zn(2+) site is built by His-58, His-60, and Lys-150. The residue at position 150 (Lys-150) is an N6-carboxylysine. Tyr-155 serves as a coordination point for substrate. 2 residues coordinate Zn(2+): His-183 and His-239. Ser-288 serves as a coordination point for substrate. Residue Asp-315 coordinates Zn(2+). Residue Asn-337 participates in substrate binding.

This sequence belongs to the metallo-dependent hydrolases superfamily. Hydantoinase/dihydropyrimidinase family. As to quaternary structure, homotetramer. The cofactor is Zn(2+). Ni(2+) serves as cofactor. It depends on Co(2+) as a cofactor. Mn(2+) is required as a cofactor. Carboxylation allows a single lysine to coordinate two zinc ions.

Completely inhibited by p-chloromercuribenzoate and partially inhibited by metal chelating agents. Its function is as follows. Catalyzes the stereospecific hydrolysis of the cyclic amide bond of D-hydantoin. Has no activity on dihydropyrimidines. The chain is D-hydantoinase from Geobacillus stearothermophilus (Bacillus stearothermophilus).